The chain runs to 367 residues: MTVMKFDLIKKEGKARRGKITFPRGDIQTPAFMPVGTYGAVKSLSPVELKEMGAEIILGNTFHLWLRPGTEIIKKHGSLHGFNGWDKPILTDSGGFQVFSLGKMRKLTEEGVTFKSPINSSKVFLSPEISMQVQRDLGSDIVMCFDECTPYPATEKEAKESMELSMRWAKRSKEAHGDNPSALFGIIQGGMYEHLRDESLAKLKEIDFDGFAIGGLSVGEPKEDMIRILDHTAHQMPEDKPRYLMGVGTPKDLVEAVYRGVDMFDCVMPSRNARNGHIFTSEGVIKIRNSKYKDDTSLLDPNCDCYTCKNFTKSYLHHLDKTKEILGSRLNTIHNLTFYQNLMKSIRKALDEGRFSEFRKEFLASYK.

Aspartate 92 functions as the Proton acceptor in the catalytic mechanism. Residues aspartate 92–phenylalanine 96, aspartate 146, glutamine 188, and glycine 215 contribute to the substrate site. The RNA binding stretch occupies residues glycine 246–aspartate 252. Aspartate 265 acts as the Nucleophile in catalysis. Zn(2+) contacts are provided by cysteine 303, cysteine 305, cysteine 308, and histidine 334.

Belongs to the queuine tRNA-ribosyltransferase family. As to quaternary structure, homodimer. Within each dimer, one monomer is responsible for RNA recognition and catalysis, while the other monomer binds to the replacement base PreQ1. Zn(2+) serves as cofactor.

The catalysed reaction is 7-aminomethyl-7-carbaguanine + guanosine(34) in tRNA = 7-aminomethyl-7-carbaguanosine(34) in tRNA + guanine. It functions in the pathway tRNA modification; tRNA-queuosine biosynthesis. In terms of biological role, catalyzes the base-exchange of a guanine (G) residue with the queuine precursor 7-aminomethyl-7-deazaguanine (PreQ1) at position 34 (anticodon wobble position) in tRNAs with GU(N) anticodons (tRNA-Asp, -Asn, -His and -Tyr). Catalysis occurs through a double-displacement mechanism. The nucleophile active site attacks the C1' of nucleotide 34 to detach the guanine base from the RNA, forming a covalent enzyme-RNA intermediate. The proton acceptor active site deprotonates the incoming PreQ1, allowing a nucleophilic attack on the C1' of the ribose to form the product. After dissociation, two additional enzymatic reactions on the tRNA convert PreQ1 to queuine (Q), resulting in the hypermodified nucleoside queuosine (7-(((4,5-cis-dihydroxy-2-cyclopenten-1-yl)amino)methyl)-7-deazaguanosine). The chain is Queuine tRNA-ribosyltransferase from Francisella tularensis subsp. mediasiatica (strain FSC147).